The sequence spans 403 residues: Probable tubulin--tyrosine ligase C12B10.04 (403 aa).

Residues 9–386 form the TTL domain; it reads KVYVNYRDEY…PFFESSTKRN (378 aa).

It belongs to the tubulin--tyrosine ligase family. The cofactor is Mg(2+). Requires K(+) as cofactor.

The protein localises to the cytoplasm. Its subcellular location is the nucleus. The catalysed reaction is C-terminal L-alpha-aminoacyl-L-glutamyl-L-glutamyl-[tubulin] + L-tyrosine + ATP = C-terminal L-alpha-aminoacyl-L-glutamyl-L-glutamyl-L-tyrosyl-[tubulin] + ADP + phosphate + H(+). Probable tubulin--tyrosine ligase. The polypeptide is Probable tubulin--tyrosine ligase C12B10.04 (Schizosaccharomyces pombe (strain 972 / ATCC 24843) (Fission yeast)).